The sequence spans 474 residues: Glutamate--tRNA ligase (474 aa).

Residues 11–21 (PSPTGFLHIGG) carry the 'HIGH' region motif. Positions 240-244 (KLSKR) match the 'KMSKS' region motif. ATP is bound at residue Lys243.

The protein belongs to the class-I aminoacyl-tRNA synthetase family. Glutamate--tRNA ligase type 1 subfamily. As to quaternary structure, monomer.

It is found in the cytoplasm. It carries out the reaction tRNA(Glu) + L-glutamate + ATP = L-glutamyl-tRNA(Glu) + AMP + diphosphate. Functionally, catalyzes the attachment of glutamate to tRNA(Glu) in a two-step reaction: glutamate is first activated by ATP to form Glu-AMP and then transferred to the acceptor end of tRNA(Glu). The polypeptide is Glutamate--tRNA ligase (Bradyrhizobium sp. (strain BTAi1 / ATCC BAA-1182)).